A 735-amino-acid polypeptide reads, in one-letter code: Phosphoribosylformylglycinamidine synthase subunit PurL (735 aa).

H50 is a catalytic residue. ATP-binding residues include Y53 and K92. E94 contacts Mg(2+). Residues 95–98 (SHNH) and R117 contribute to the substrate site. The active-site Proton acceptor is the H96. D118 lines the Mg(2+) pocket. Position 241 (Q241) interacts with substrate. A Mg(2+)-binding site is contributed by D269. 313–315 (ESQ) contacts substrate. ATP is bound by residues D495 and G532. N533 provides a ligand contact to Mg(2+). S535 contacts substrate.

Belongs to the FGAMS family. Monomer. Part of the FGAM synthase complex composed of 1 PurL, 1 PurQ and 2 PurS subunits.

The protein localises to the cytoplasm. It catalyses the reaction N(2)-formyl-N(1)-(5-phospho-beta-D-ribosyl)glycinamide + L-glutamine + ATP + H2O = 2-formamido-N(1)-(5-O-phospho-beta-D-ribosyl)acetamidine + L-glutamate + ADP + phosphate + H(+). It participates in purine metabolism; IMP biosynthesis via de novo pathway; 5-amino-1-(5-phospho-D-ribosyl)imidazole from N(2)-formyl-N(1)-(5-phospho-D-ribosyl)glycinamide: step 1/2. Its function is as follows. Part of the phosphoribosylformylglycinamidine synthase complex involved in the purines biosynthetic pathway. Catalyzes the ATP-dependent conversion of formylglycinamide ribonucleotide (FGAR) and glutamine to yield formylglycinamidine ribonucleotide (FGAM) and glutamate. The FGAM synthase complex is composed of three subunits. PurQ produces an ammonia molecule by converting glutamine to glutamate. PurL transfers the ammonia molecule to FGAR to form FGAM in an ATP-dependent manner. PurS interacts with PurQ and PurL and is thought to assist in the transfer of the ammonia molecule from PurQ to PurL. This chain is Phosphoribosylformylglycinamidine synthase subunit PurL, found in Bartonella henselae (strain ATCC 49882 / DSM 28221 / CCUG 30454 / Houston 1) (Rochalimaea henselae).